The sequence spans 355 residues: Iron deficiency-induced protein A (355 aa).

The segment at residues 1 to 34 (MEKVGRRVFLGMGAAATAYVTHHLWNQNAESSYA) is a signal peptide (tat-type signal). Positions 49, 50, 180, 236, and 237 each coordinate Fe cation.

It belongs to the bacterial solute-binding protein 1 family. Predicted to be exported by the Tat system. The position of the signal peptide cleavage has not been experimentally proven.

It localises to the cellular thylakoid membrane. Plays an important role in protecting the acceptor side of photosystem II (PSII) against oxidative damage, especially under iron-limiting growth conditions. Its function is as follows. May also be part of a periplasmic ABC transporter complex involved in iron import. This is Iron deficiency-induced protein A (idiA) from Thermosynechococcus vestitus (strain NIES-2133 / IAM M-273 / BP-1).